The sequence spans 288 residues: MDMSGMDGMDHMSSTSSNMSMSMKMYFHGTIGGDLLWFASWMPSSAGATVGVCIGLFILAIFERYLVAFRRACDAAWRRGQVGYVRPCSNGPLVFSSGKSTSLPPPVLFNRRSSTKKEKDVYNPLTPSDYALESNQDGSVEPVTPYTPSIHALRESQEGSSAPSYAHSQQGQAQAQGSGVGCDPCAEGRVAEIERCKEKAVERGLVHSHLPKAVRRSLDPGREGRWSRPFRLAVDVPRGLLQALQTLIHYLLMLVVMTFNIWWMISVVIGCGVGEMLFGRFGSSHVGH.

Asn-18 carries N-linked (GlcNAc...) asparagine glycosylation. Residues 42 to 62 (MPSSAGATVGVCIGLFILAIF) form a helical membrane-spanning segment. 2 disordered regions span residues 106 to 125 (PVLF…YNPL) and 154 to 180 (RESQ…GSGV). The span at 158 to 167 (EGSSAPSYAH) shows a compositional bias: polar residues. Low complexity predominate over residues 168–177 (SQQGQAQAQG). A helical membrane pass occupies residues 251 to 271 (LLMLVVMTFNIWWMISVVIGC).

This sequence belongs to the copper transporter (Ctr) (TC 1.A.56) family. SLC31A subfamily. In terms of assembly, interacts with the copper acquisition factor BIM1.

The protein resides in the cell membrane. In terms of biological role, high affinity copper transporter involved in Cu(+) import into the cell upon copper-limitating conditions. Functions with BIM1 and probably also FRE4 and FRE7, where FRE4 and FRE7 metalloreductases liberate the Cu(2+) bound to the BIM1 copper-binding site for subsequent import of Cu(+) into the cell by CTR1, via the reduction of BIM1-bound Cu(2+) to Cu(+) to reduce binding affinity for BIM1 but increase affinity for CTR1. The BIM1-CTR1 pathway for copper uptake plays a key role in colonization in the brain where copper amounts are low and thus in cryptococcal meningitis. This Cryptococcus neoformans var. grubii serotype A (strain H99 / ATCC 208821 / CBS 10515 / FGSC 9487) (Filobasidiella neoformans var. grubii) protein is CUF1-dependent copper transporter 1.